The chain runs to 377 residues: Pseudouridylate synthase RPUSD4, mitochondrial (377 aa).

A mitochondrion-targeting transit peptide spans 1–35 (MAAPLLGSPGLQVLSMSSRTGKLFTPSSRSFCSRA). Asp153 is an active-site residue.

Belongs to the pseudouridine synthase RluA family. As to quaternary structure, interacts with 16S mt-rRNA, mt-tRNA(Phe) and mt-tRNA(Met). Forms a regulatory protein-RNA complex, consisting of RCC1L, NGRN, RPUSD3, RPUSD4, TRUB2, FASTKD2 and 16S mt-rRNA.

The protein resides in the mitochondrion matrix. It is found in the nucleus. It localises to the cytoplasm. It catalyses the reaction uridine in 5S rRNA = pseudouridine in 5S rRNA. It carries out the reaction a uridine in tRNA = a pseudouridine in tRNA. The catalysed reaction is a uridine in mRNA = a pseudouridine in mRNA. Functionally, catalyzes uridine to pseudouridine isomerization (pseudouridylation) of different mitochondrial RNA substrates. Acts on position 1397 in 16S mitochondrial ribosomal RNA (16S mt-rRNA). This modification is required for the assembly of 16S mt-rRNA into a functional mitochondrial ribosome. As a component of a functional protein-RNA module, consisting of RCC1L, NGRN, RPUSD3, RPUSD4, TRUB2, FASTKD2 and 16S mt-rRNA, controls 16S mt-rRNA abundance and is required for intra-mitochondrial translation. Acts on position 39 in mitochondrial tRNA(Phe). Also catalyzes pseudouridylation of mRNAs in nucleus: acts as a regulator of pre-mRNA splicing by mediating pseudouridylation of pre-mRNAs at locations associated with alternatively spliced regions. Pseudouridylation of pre-mRNAs near splice sites directly regulates mRNA splicing and mRNA 3'-end processing. In Rattus norvegicus (Rat), this protein is Pseudouridylate synthase RPUSD4, mitochondrial.